The sequence spans 265 residues: Cell division protein DivIB (265 aa).

At 1 to 33 (MRMELKMMGNVNKSNKTNEYILRRHKKKRKKKL) the chain is on the cytoplasmic side. Residues 34-54 (IIFSILLISILVTLCFKHPFF) traverse the membrane as a helical segment. A POTRA domain is found at 54 to 122 (FNVKIVEVKD…NKIVIHIKER (69 aa)). Residues 55 to 265 (NVKIVEVKDN…FKGNPVVFIK (211 aa)) lie on the Extracellular side of the membrane.

It belongs to the FtsQ/DivIB family. DivIB subfamily.

Its subcellular location is the cell membrane. Cell division protein that may be involved in stabilizing or promoting the assembly of the division complex. The polypeptide is Cell division protein DivIB (Clostridium tetani (strain Massachusetts / E88)).